Here is a 354-residue protein sequence, read N- to C-terminus: Clavesin-1 (354 aa).

A CRAL-TRIO domain is found at 118–279 (IKRALIDGFP…EFGGTLPPYD (162 aa)). Residues 333 to 354 (AGTLKHEEKGENENTQPLLALD) form a disordered region. The segment covering 335–344 (TLKHEEKGEN) has biased composition (basic and acidic residues). Residues 345 to 354 (ENTQPLLALD) are compositionally biased toward polar residues.

In terms of assembly, forms a complex with clathrin heavy chain and gamma-adaptin.

Its subcellular location is the golgi apparatus. It localises to the trans-Golgi network membrane. The protein localises to the early endosome membrane. It is found in the cytoplasmic vesicle. The protein resides in the clathrin-coated vesicle. Required for normal morphology of late endosomes and/or lysosomes in neurons. Binds phosphatidylinositol 3,5-bisphosphate (PtdIns(3,5)P2). The chain is Clavesin-1 (CLVS1) from Pongo abelii (Sumatran orangutan).